The sequence spans 271 residues: N-acylmannosamine 1-dehydrogenase (271 aa).

20-44 (VTGAAGGIGRATVEAYLREGASVVA) contributes to the NAD(+) binding site. Ser153 lines the substrate pocket. The Proton acceptor role is filled by Tyr166.

Belongs to the short-chain dehydrogenases/reductases (SDR) family.

The enzyme catalyses an N-acyl-D-mannosamine + NAD(+) = an N-acyl-D-mannosaminolactone + NADH + H(+). In terms of biological role, acts on acetyl-D-mannosamine and glycolyl-D-mannosamine. This Flavobacterium sp. (strain 141-8) protein is N-acylmannosamine 1-dehydrogenase.